The chain runs to 230 residues: Large ribosomal subunit protein uL1 (230 aa).

The protein belongs to the universal ribosomal protein uL1 family. Part of the 50S ribosomal subunit.

In terms of biological role, binds directly to 23S rRNA. The L1 stalk is quite mobile in the ribosome, and is involved in E site tRNA release. Its function is as follows. Protein L1 is also a translational repressor protein, it controls the translation of the L11 operon by binding to its mRNA. This chain is Large ribosomal subunit protein uL1, found in Bradyrhizobium diazoefficiens (strain JCM 10833 / BCRC 13528 / IAM 13628 / NBRC 14792 / USDA 110).